The sequence spans 429 residues: Enolase (429 aa).

Glutamine 162 provides a ligand contact to (2R)-2-phosphoglycerate. Catalysis depends on glutamate 204, which acts as the Proton donor. Residues aspartate 241, glutamate 286, and aspartate 313 each coordinate Mg(2+). 4 residues coordinate (2R)-2-phosphoglycerate: lysine 338, arginine 367, serine 368, and lysine 389. The Proton acceptor role is filled by lysine 338.

It belongs to the enolase family. Requires Mg(2+) as cofactor.

The protein resides in the cytoplasm. Its subcellular location is the secreted. It is found in the cell surface. The catalysed reaction is (2R)-2-phosphoglycerate = phosphoenolpyruvate + H2O. It functions in the pathway carbohydrate degradation; glycolysis; pyruvate from D-glyceraldehyde 3-phosphate: step 4/5. Functionally, catalyzes the reversible conversion of 2-phosphoglycerate (2-PG) into phosphoenolpyruvate (PEP). It is essential for the degradation of carbohydrates via glycolysis. The sequence is that of Enolase from Halalkalibacterium halodurans (strain ATCC BAA-125 / DSM 18197 / FERM 7344 / JCM 9153 / C-125) (Bacillus halodurans).